A 396-amino-acid chain; its full sequence is 1-deoxy-D-xylulose 5-phosphate reductoisomerase (396 aa).

Positions 15, 16, 17, 18, 41, and 129 each coordinate NADPH. 1-deoxy-D-xylulose 5-phosphate is bound at residue Lys130. Glu131 lines the NADPH pocket. Residue Asp155 coordinates Mn(2+). 1-deoxy-D-xylulose 5-phosphate contacts are provided by Ser156, Glu157, Ser182, and His205. Glu157 serves as a coordination point for Mn(2+). Residue Gly211 participates in NADPH binding. 1-deoxy-D-xylulose 5-phosphate is bound by residues Ser218, Asn223, Lys224, and Glu227. Glu227 serves as a coordination point for Mn(2+).

Belongs to the DXR family. Mg(2+) serves as cofactor. Requires Mn(2+) as cofactor.

The catalysed reaction is 2-C-methyl-D-erythritol 4-phosphate + NADP(+) = 1-deoxy-D-xylulose 5-phosphate + NADPH + H(+). It functions in the pathway isoprenoid biosynthesis; isopentenyl diphosphate biosynthesis via DXP pathway; isopentenyl diphosphate from 1-deoxy-D-xylulose 5-phosphate: step 1/6. Catalyzes the NADPH-dependent rearrangement and reduction of 1-deoxy-D-xylulose-5-phosphate (DXP) to 2-C-methyl-D-erythritol 4-phosphate (MEP). The chain is 1-deoxy-D-xylulose 5-phosphate reductoisomerase from Xanthomonas axonopodis pv. citri (strain 306).